We begin with the raw amino-acid sequence, 297 residues long: GTPase Era (297 aa).

The region spanning 7 to 174 is the Era-type G domain; the sequence is RSGFVSIVGR…VQLVHGLLPE (168 aa). The tract at residues 15–22 is G1; sequence GRPNVGKS. 15–22 lines the GTP pocket; it reads GRPNVGKS. The tract at residues 41 to 45 is G2; sequence QTTRN. The segment at 62 to 65 is G3; that stretch reads DTPG. Residues 62–66 and 124–127 each bind GTP; these read DTPGI and NKID. The tract at residues 124-127 is G4; sequence NKID. The interval 153-155 is G5; that stretch reads VSA. The region spanning 205–282 is the KH type-2 domain; it reads THDEVPYSTA…FLELFVRVSG (78 aa).

The protein belongs to the TRAFAC class TrmE-Era-EngA-EngB-Septin-like GTPase superfamily. Era GTPase family. As to quaternary structure, monomer.

It localises to the cytoplasm. The protein resides in the cell inner membrane. An essential GTPase that binds both GDP and GTP, with rapid nucleotide exchange. Plays a role in 16S rRNA processing and 30S ribosomal subunit biogenesis and possibly also in cell cycle regulation and energy metabolism. In Geobacter sp. (strain M21), this protein is GTPase Era.